Here is a 385-residue protein sequence, read N- to C-terminus: 1-deoxy-D-xylulose 5-phosphate reductoisomerase (385 aa).

NADPH is bound by residues Thr-10, Gly-11, Ser-12, Ile-13, Lys-37, and Asn-124. Position 125 (Lys-125) interacts with 1-deoxy-D-xylulose 5-phosphate. Glu-126 contributes to the NADPH binding site. A Mn(2+)-binding site is contributed by Asp-150. 1-deoxy-D-xylulose 5-phosphate contacts are provided by Ser-151, Glu-152, Ser-176, and His-199. Glu-152 provides a ligand contact to Mn(2+). NADPH is bound at residue Gly-205. 1-deoxy-D-xylulose 5-phosphate-binding residues include Ser-212, Asn-217, Lys-218, and Glu-221. Glu-221 contacts Mn(2+).

This sequence belongs to the DXR family. Mg(2+) is required as a cofactor. The cofactor is Mn(2+).

The catalysed reaction is 2-C-methyl-D-erythritol 4-phosphate + NADP(+) = 1-deoxy-D-xylulose 5-phosphate + NADPH + H(+). It functions in the pathway isoprenoid biosynthesis; isopentenyl diphosphate biosynthesis via DXP pathway; isopentenyl diphosphate from 1-deoxy-D-xylulose 5-phosphate: step 1/6. Its function is as follows. Catalyzes the NADPH-dependent rearrangement and reduction of 1-deoxy-D-xylulose-5-phosphate (DXP) to 2-C-methyl-D-erythritol 4-phosphate (MEP). This is 1-deoxy-D-xylulose 5-phosphate reductoisomerase from Clostridium botulinum (strain Loch Maree / Type A3).